The sequence spans 587 residues: Aspartate--tRNA ligase (587 aa).

L-aspartate is bound at residue glutamate 174. Residues 198–201 (QITK) form an aspartate region. Residue arginine 220 participates in L-aspartate binding. ATP is bound by residues 220-222 (RDE) and glutamine 229. Histidine 443 contributes to the L-aspartate binding site. ATP is bound at residue glutamate 477. An L-aspartate-binding site is contributed by arginine 484. Residue 529–532 (GLDR) participates in ATP binding.

The protein belongs to the class-II aminoacyl-tRNA synthetase family. Type 1 subfamily. In terms of assembly, homodimer.

It is found in the cytoplasm. The catalysed reaction is tRNA(Asp) + L-aspartate + ATP = L-aspartyl-tRNA(Asp) + AMP + diphosphate. Its function is as follows. Catalyzes the attachment of L-aspartate to tRNA(Asp) in a two-step reaction: L-aspartate is first activated by ATP to form Asp-AMP and then transferred to the acceptor end of tRNA(Asp). The protein is Aspartate--tRNA ligase of Streptococcus pneumoniae (strain Taiwan19F-14).